The chain runs to 808 residues: Phospholipase D alpha 1 (808 aa).

The region spanning 1–125 (MAQILLHGTL…LEGEEIDKWV (125 aa)) is the C2 domain. Position 186 (Asp-186) interacts with Ca(2+). Positions 326–364 (TMFTHHQKIVVVDSELPSGESEKRRILSFVGGIDLCDGR) constitute a PLD phosphodiesterase 1 domain. Residues His-331, Lys-333, and Asp-338 contribute to the active site. Residue His-331 coordinates a 1,2-diacyl-sn-glycero-3-phosphate. His-370 and His-404 together coordinate Ca(2+). Gln-520 and His-659 together coordinate a 1,2-diacyl-sn-glycero-3-phosphate. In terms of domain architecture, PLD phosphodiesterase 2 spans 654–681 (FMIYVHSKMMIVDDEYIIVGSANINQRS). Active-site residues include His-659, Lys-661, and Asp-666. Glu-720 is a binding site for Ca(2+).

Belongs to the phospholipase D family. C2-PLD subfamily. The cofactor is Ca(2+).

It carries out the reaction a 1,2-diacyl-sn-glycero-3-phosphocholine + H2O = a 1,2-diacyl-sn-glycero-3-phosphate + choline + H(+). Hydrolyzes glycerol-phospholipids at the terminal phosphodiesteric bond. Plays an important role in various cellular processes. This Nicotiana tabacum (Common tobacco) protein is Phospholipase D alpha 1 (PLD1).